The chain runs to 779 residues: Autophagy-related protein 13 (779 aa).

4 disordered regions span residues 298–368, 392–488, 520–541, and 571–652; these read PLTE…GGSL, PRSS…LTGG, TAHN…DALN, and GSGS…SAAT. Positions 308–320 are enriched in polar residues; sequence KANNTSMSVSPCS. Over residues 394-425 the composition is skewed to low complexity; sequence SSTSSTHTTSNIPIAPSSSSNSTNATNMNNMS. Positions 426-455 are enriched in polar residues; it reads YPRSISSSHGSNMQHDDSMFSNPDSTTNTP. Low complexity predominate over residues 456-470; that stretch reads RFSSSFGSRASRRYS. 2 stretches are compositionally biased toward polar residues: residues 471-488 and 520-533; these read NTSV…LTGG and TAHN…NMGS. Composition is skewed to low complexity over residues 593-602 and 620-632; these read SIRSPSPSMS and SSGA…LSLP. Residues 642–652 are compositionally biased toward polar residues; sequence PSATEPTSAAT.

Belongs to the ATG13 family. Fungi subfamily. In terms of assembly, interacts with ATG1 to form the ATG1-ATG13 kinase complex.

It is found in the cytoplasm. It localises to the preautophagosomal structure. In terms of biological role, activates the ATG1 kinase in a nutritional condition dependent manner through the TOR pathway, leading to autophagy. Also involved in cytoplasm to vacuole transport (Cvt) and more specifically in Cvt vesicle formation. Seems to play a role in the switching machinery regulating the conversion between the Cvt pathway and autophagy. Finally, ATG13 is also required for glycogen storage during stationary phase. This chain is Autophagy-related protein 13 (ATG13), found in Scheffersomyces stipitis (strain ATCC 58785 / CBS 6054 / NBRC 10063 / NRRL Y-11545) (Yeast).